The primary structure comprises 87 residues: Selenoprotein W (87 aa).

Residues 10–13 constitute a cross-link (cysteinyl-selenocysteine (Cys-Sec); redox-active); that stretch reads CGAU. A non-standard amino acid (selenocysteine) is located at residue Sec-13. Cys-37 carries the S-glutathionyl cysteine modification.

The protein belongs to the SelWTH family. Selenoprotein W subfamily. As to quaternary structure, interacts with DPYSL2, PRDX1, YWHAB, YWHAG, HSP70 and HSP90. As to expression, detected in muscle, heart, tongue, brain, lung, spleen, kidney and liver. Highest levels expressed in muscle and heart whereas lowest levels detected in liver (at protein level).

It is found in the cytoplasm. Plays a role as a glutathione (GSH)-dependent antioxidant. May be involved in a redox-related process. May play a role in the myopathies of selenium deficiency. The sequence is that of Selenoprotein W from Ovis aries (Sheep).